The primary structure comprises 500 residues: Amino-acid acetyltransferase, mitochondrial (500 aa).

The N-terminal 19 residues, 1–19 (MQKPSLSQDLIWILKSVQS), are a transit peptide targeting the mitochondrion. The 161-residue stretch at 336 to 496 (FLGPKCLTDG…YMSVIDKIQP (161 aa)) folds into the N-acetyltransferase domain.

This sequence belongs to the acetyltransferase family.

The protein localises to the mitochondrion. The catalysed reaction is L-glutamate + acetyl-CoA = N-acetyl-L-glutamate + CoA + H(+). It participates in amino-acid biosynthesis; L-arginine biosynthesis; N(2)-acetyl-L-ornithine from L-glutamate: step 1/4. Its function is as follows. N-acetylglutamate synthase involved in arginine biosynthesis. The sequence is that of Amino-acid acetyltransferase, mitochondrial (arg6) from Schizosaccharomyces pombe (strain 972 / ATCC 24843) (Fission yeast).